The following is a 339-amino-acid chain: Dual specificity protein phosphatase 12 (339 aa).

The residue at position 1 (methionine 1) is an N-acetylmethionine. A compositionally biased stretch (polar residues) spans 1 to 22 (MLEVQSSNHGCERQAPTTSPAS). The disordered stretch occupies residues 1-25 (MLEVQSSNHGCERQAPTTSPASSAG). A Tyrosine-protein phosphatase domain is found at 26 to 170 (HAVEVRPGLY…LKLYEAMGHE (145 aa)). Cysteine 114 functions as the Phosphocysteine intermediate in the catalytic mechanism. A substrate-binding site is contributed by 115–120 (HAGVSR). The residue at position 334 (serine 334) is a Phosphoserine.

Belongs to the protein-tyrosine phosphatase family. Non-receptor class dual specificity subfamily. Monomer. Zn(2+) is required as a cofactor.

It localises to the nucleus. It is found in the cytoplasm. The protein localises to the cytosol. The enzyme catalyses O-phospho-L-tyrosyl-[protein] + H2O = L-tyrosyl-[protein] + phosphate. The catalysed reaction is O-phospho-L-seryl-[protein] + H2O = L-seryl-[protein] + phosphate. It catalyses the reaction O-phospho-L-threonyl-[protein] + H2O = L-threonyl-[protein] + phosphate. Functionally, dual specificity phosphatase; can dephosphorylate both phosphotyrosine and phosphoserine or phosphothreonine residues. Can dephosphorylate glucokinase (in vitro). Has phosphatase activity with the synthetic substrate 6,8-difluoro-4-methylumbelliferyl phosphate and other in vitro substrates. This Rattus norvegicus (Rat) protein is Dual specificity protein phosphatase 12 (Dusp12).